An 85-amino-acid polypeptide reads, in one-letter code: Neutrophil elastase 2A (85 aa).

The Peptidase S1 domain maps to 1–85 (IVGGRAAEPH…VAQGVFSFVR (85 aa)). Ser67 functions as the Charge relay system in the catalytic mechanism.

It belongs to the peptidase S1 family. Elastase subfamily.

In terms of biological role, may be involved in the degradation of connective tissue in chronic lung disease. In Equus caballus (Horse), this protein is Neutrophil elastase 2A.